A 264-amino-acid chain; its full sequence is Phosphate import ATP-binding protein PstB (264 aa).

An ABC transporter domain is found at 11–250 (LKAEALSVYY…DTTEKIFDSP (240 aa)). 43–50 (GPSGCGKS) is an ATP binding site.

This sequence belongs to the ABC transporter superfamily. Phosphate importer (TC 3.A.1.7) family. In terms of assembly, the complex is composed of two ATP-binding proteins (PstB), two transmembrane proteins (PstC and PstA) and a solute-binding protein (PstS).

Its subcellular location is the cell inner membrane. It carries out the reaction phosphate(out) + ATP + H2O = ADP + 2 phosphate(in) + H(+). Part of the ABC transporter complex PstSACB involved in phosphate import. Responsible for energy coupling to the transport system. The polypeptide is Phosphate import ATP-binding protein PstB (Synechococcus sp. (strain ATCC 27144 / PCC 6301 / SAUG 1402/1) (Anacystis nidulans)).